The following is a 472-amino-acid chain: Glutamine synthetase (472 aa).

The GS beta-grasp domain maps to 17–101 (NNVKFVLLRF…IRCSVYEPTT (85 aa)). The 364-residue stretch at 109–472 (PRSIAIRAEN…HPVEFEMYYA (364 aa)) folds into the GS catalytic domain. Residues Glu-134 and Glu-136 each coordinate Mg(2+). Residue Glu-212 participates in ATP binding. Mg(2+) is bound by residues Glu-217 and Glu-225. Residues 269-270 (NG) and Gly-270 contribute to the L-glutamate site. Residue His-274 participates in Mg(2+) binding. ATP is bound by residues 276–278 (NMS) and Ser-278. 3 residues coordinate L-glutamate: Arg-326, Glu-332, and Arg-344. Residues Arg-344, Arg-349, and Lys-357 each contribute to the ATP site. Mg(2+) is bound at residue Glu-362. Arg-364 serves as a coordination point for L-glutamate. Residue Tyr-402 is modified to O-AMP-tyrosine.

The protein belongs to the glutamine synthetase family. In terms of assembly, oligomer of 12 subunits arranged in the form of two hexameric ring. Requires Mg(2+) as cofactor.

It is found in the cytoplasm. It carries out the reaction L-glutamate + NH4(+) + ATP = L-glutamine + ADP + phosphate + H(+). With respect to regulation, the activity of this enzyme could be controlled by adenylation under conditions of abundant glutamine. In terms of biological role, catalyzes the ATP-dependent biosynthesis of glutamine from glutamate and ammonia. This is Glutamine synthetase from Haemophilus influenzae (strain ATCC 51907 / DSM 11121 / KW20 / Rd).